Consider the following 44-residue polypeptide: Photosystem I reaction center subunit IX (44 aa).

Residues 9-29 traverse the membrane as a helical segment; that stretch reads YMRSAPVVAAAWITMTAGIII.

It belongs to the PsaJ family.

It localises to the cellular thylakoid membrane. In terms of biological role, may help in the organization of the PsaE and PsaF subunits. This is Photosystem I reaction center subunit IX from Prochlorococcus marinus (strain MIT 9312).